Here is a 352-residue protein sequence, read N- to C-terminus: Maleylacetate reductase (352 aa).

Belongs to the iron-containing alcohol dehydrogenase family.

It carries out the reaction 3-oxoadipate + NAD(+) = maleylacetate + NADH + H(+). It catalyses the reaction 3-oxoadipate + NADP(+) = maleylacetate + NADPH + H(+). The protein operates within xenobiotic degradation; (2,4,5-trichlorophenoxy)acetate degradation. This Burkholderia cepacia (Pseudomonas cepacia) protein is Maleylacetate reductase (tftE).